Here is a 436-residue protein sequence, read N- to C-terminus: Cold sensitive U2 snRNA suppressor 1 (436 aa).

Residues 1 to 10 show a composition bias toward basic residues; it reads MARTKSRKRS. Positions 1-22 are disordered; it reads MARTKSRKRSGNNQNKNASVVN. The span at 12-22 shows a compositional bias: low complexity; that stretch reads NNQNKNASVVN. Residues threonine 104 and threonine 112 each carry the phosphothreonine modification. At serine 114 the chain carries Phosphoserine. The interval 374–436 is disordered; that stretch reads EFENSKEDTQ…SEKQLYTVLK (63 aa). The segment covering 389 to 408 has biased composition (basic and acidic residues); that stretch reads GRQDDKIDDEVEHKLDHFQE.

To mammalian SAP 145. Some, to C.elegans ZK632.11. As to quaternary structure, belongs to the CWC complex (or CEF1-associated complex), a spliceosome sub-complex reminiscent of a late-stage spliceosome composed of the U2, U5 and U6 snRNAs and at least BUD13, BUD31, BRR2, CDC40, CEF1, CLF1, CUS1, CWC2, CWC15, CWC21, CWC22, CWC23, CWC24, CWC25, CWC27, ECM2, HSH155, IST3, ISY1, LEA1, MSL1, NTC20, PRP8, PRP9, PRP11, PRP19, PRP21, PRP22, PRP45, PRP46, SLU7, SMB1, SMD1, SMD2, SMD3, SMX2, SMX3, SNT309, SNU114, SPP2, SYF1, SYF2, RSE1 and YJU2. Interacts with RDS3.

The protein resides in the nucleus. Functionally, essential splicing protein required for U2 snRNP binding to pre-mRNA during spliceosome assembly. This Saccharomyces cerevisiae (strain ATCC 204508 / S288c) (Baker's yeast) protein is Cold sensitive U2 snRNA suppressor 1 (CUS1).